We begin with the raw amino-acid sequence, 317 residues long: L-lactate dehydrogenase (317 aa).

Residues Val-17, Asp-38, Lys-43, Tyr-69, and 83-84 (GA) each bind NAD(+). 2 residues coordinate substrate: Gln-86 and Arg-92. NAD(+)-binding positions include Ser-105, 122 to 124 (ATN), and Ser-147. 124–127 (NPVD) contributes to the substrate binding site. 152–155 (DSAR) is a binding site for substrate. Beta-D-fructose 1,6-bisphosphate contacts are provided by Arg-157 and His-172. The active-site Proton acceptor is the His-179. The residue at position 224 (Tyr-224) is a Phosphotyrosine. A substrate-binding site is contributed by Thr-233.

Belongs to the LDH/MDH superfamily. LDH family. Homotetramer.

The protein localises to the cytoplasm. The catalysed reaction is (S)-lactate + NAD(+) = pyruvate + NADH + H(+). It functions in the pathway fermentation; pyruvate fermentation to lactate; (S)-lactate from pyruvate: step 1/1. With respect to regulation, allosterically activated by fructose 1,6-bisphosphate (FBP). Catalyzes the conversion of lactate to pyruvate. In Bacillus velezensis (strain DSM 23117 / BGSC 10A6 / LMG 26770 / FZB42) (Bacillus amyloliquefaciens subsp. plantarum), this protein is L-lactate dehydrogenase.